The primary structure comprises 132 residues: Small ribosomal subunit protein uS8 (132 aa).

The protein belongs to the universal ribosomal protein uS8 family. Part of the 30S ribosomal subunit. Contacts proteins S5 and S12.

Its function is as follows. One of the primary rRNA binding proteins, it binds directly to 16S rRNA central domain where it helps coordinate assembly of the platform of the 30S subunit. This Psychrobacter sp. (strain PRwf-1) protein is Small ribosomal subunit protein uS8.